The following is an 83-amino-acid chain: Mu-theraphotoxin-Hhn2b 3 (83 aa).

A signal peptide spans 1 to 21; sequence MKASMFLALAGLVLLFVVCYA. Positions 22–48 are excised as a propeptide; it reads SESEEKEFPRELISKIFAVDDFKGEVR. Intrachain disulfides connect C50–C65, C57–C70, and C64–C77. L81 carries the post-translational modification Leucine amide.

The protein belongs to the neurotoxin 10 (Hwtx-1) family. 14 (Hntx-1) subfamily. Monomer. As to expression, expressed by the venom gland.

Its subcellular location is the secreted. Its function is as follows. Weakly blocks the rat SCN2A/SCN1B (Nav1.2/beta-1) sodium channel (IC(50)=68 uM) and the insect sodium channel para/tipE (IC(50)=4.3 uM), without altering the activation or inactivation kinetics (depressant toxin). The sequence is that of Mu-theraphotoxin-Hhn2b 3 from Cyriopagopus hainanus (Chinese bird spider).